The following is a 193-amino-acid chain: Small ribosomal subunit protein eS7 (193 aa).

It belongs to the eukaryotic ribosomal protein eS7 family.

The sequence is that of Small ribosomal subunit protein eS7 (rps7) from Dictyostelium discoideum (Social amoeba).